The primary structure comprises 311 residues: MVSTATQIAGFNFDNCLMNAAGVYCMSKEELLEIETSAAGSFVTKTGTLEAREGNPEPRYAPTPLGSINSMGLPNMGYDYYLDVVLDLEKEENSKNHFISVVGLSPEDTHTILKTLHSSAYQGLVELNLSCPNVPGKPQIAYDFETTEQLLTEIFSYYTKPLGVKLPPYFDIVHFDQAAAIFNKFPLAFVNSVNSIGNGLVIDDETVIIKPKNGFGGIGGDYIKPTALANVHAFYQRLNPSIQIIGTGGVKSGRDAFEHILCGASMVQIGTALQEEGPEIFTRITEELKQIMVEKGYQRLDDFRGKLHYLD.

Residues K45, 69–73 (NSMGL), and N128 contribute to the substrate site. 45-46 (KT) is an FMN binding site. Residue N128 participates in FMN binding. C131 functions as the Nucleophile in the catalytic mechanism. Positions 165 and 193 each coordinate FMN. Residue 194–195 (NS) coordinates substrate. FMN-binding positions include G220, 248 to 249 (GG), and 270 to 271 (GT).

Belongs to the dihydroorotate dehydrogenase family. Type 1 subfamily. In terms of assembly, homodimer. FMN is required as a cofactor.

It localises to the cytoplasm. The enzyme catalyses (S)-dihydroorotate + fumarate = orotate + succinate. The protein operates within pyrimidine metabolism; UMP biosynthesis via de novo pathway. Functionally, catalyzes the conversion of dihydroorotate to orotate with fumarate as the electron acceptor. The protein is Putative dihydroorotate dehydrogenase A (fumarate) (pyrD) of Streptococcus uberis (strain ATCC BAA-854 / 0140J).